We begin with the raw amino-acid sequence, 265 residues long: Taurine import ATP-binding protein TauB (265 aa).

Positions 7–236 (QNLNMIFKTP…MGIDGDLREI (230 aa)) constitute an ABC transporter domain. 41–48 (GPSGCGKT) contacts ATP.

The protein belongs to the ABC transporter superfamily. Taurine importer (TC 3.A.1.17.1) family. The complex is composed of two ATP-binding proteins (TauB), two transmembrane proteins (TauC) and a solute-binding protein (TauA).

Its subcellular location is the cell inner membrane. It catalyses the reaction taurine(out) + ATP + H2O = taurine(in) + ADP + phosphate + H(+). Functionally, part of the ABC transporter complex TauABC involved in taurine import. Responsible for energy coupling to the transport system. This is Taurine import ATP-binding protein TauB from Pelagibacter ubique (strain HTCC1062).